Consider the following 195-residue polypeptide: Peptidyl-tRNA hydrolase (195 aa).

Residue tyrosine 18 coordinates tRNA. Histidine 23 functions as the Proton acceptor in the catalytic mechanism. 3 residues coordinate tRNA: tyrosine 69, asparagine 71, and asparagine 117.

The protein belongs to the PTH family. Monomer.

The protein localises to the cytoplasm. It carries out the reaction an N-acyl-L-alpha-aminoacyl-tRNA + H2O = an N-acyl-L-amino acid + a tRNA + H(+). In terms of biological role, hydrolyzes ribosome-free peptidyl-tRNAs (with 1 or more amino acids incorporated), which drop off the ribosome during protein synthesis, or as a result of ribosome stalling. Its function is as follows. Catalyzes the release of premature peptidyl moieties from peptidyl-tRNA molecules trapped in stalled 50S ribosomal subunits, and thus maintains levels of free tRNAs and 50S ribosomes. This chain is Peptidyl-tRNA hydrolase, found in Nitrosomonas eutropha (strain DSM 101675 / C91 / Nm57).